The sequence spans 511 residues: Cytochrome P450 26B1 (511 aa).

A heme-binding site is contributed by cysteine 440.

This sequence belongs to the cytochrome P450 family. Heme serves as cofactor.

The protein resides in the endoplasmic reticulum membrane. Its subcellular location is the microsome membrane. It catalyses the reaction all-trans-retinoate + reduced [NADPH--hemoprotein reductase] + O2 = all-trans-4-hydroxyretinoate + oxidized [NADPH--hemoprotein reductase] + H2O + H(+). The catalysed reaction is all-trans-retinoate + reduced [NADPH--hemoprotein reductase] + O2 = all-trans-18-hydroxyretinoate + oxidized [NADPH--hemoprotein reductase] + H2O + H(+). In terms of biological role, a cytochrome P450 monooxygenase involved in the metabolism of retinoates (RAs), the active metabolites of vitamin A, and critical signaling molecules in animals. RAs exist as at least four different isomers: all-trans-RA (atRA), 9-cis-RA, 13-cis-RA, and 9,13-dicis-RA, where atRA is considered to be the biologically active isomer, although 9-cis-RA and 13-cis-RA also have activity. Catalyzes the hydroxylation of atRA primarily at C-4 and C-18, thereby contributing to the regulation of atRA homeostasis and signaling. Hydroxylation of atRA limits its biological activity and initiates a degradative process leading to its eventual elimination. Involved in the convertion of atRA to all-trans-4-oxo-RA. Can oxidize all-trans-13,14-dihydroretinoate (DRA) to metabolites which could include all-trans-4-oxo-DRA, all-trans-4-hydroxy-DRA, all-trans-5,8-epoxy-DRA, and all-trans-18-hydroxy-DRA. The polypeptide is Cytochrome P450 26B1 (cyp26b1) (Xenopus tropicalis (Western clawed frog)).